A 276-amino-acid chain; its full sequence is uncharacterized protein (276 aa).

The 118-residue stretch at 20 to 137 folds into the AB hydrolase-1 domain; sequence PVLIFIPGAN…PPINTFLPDS (118 aa). The segment at 57-76 is disordered; sequence GESELTEPLPDSASNPDSDY.

This sequence belongs to the AB hydrolase superfamily.

This is an uncharacterized protein from Staphylococcus aureus (strain COL).